Reading from the N-terminus, the 115-residue chain is MNLLLTLLTNTTLALLLVFIAFWLPQLNVYAEKTSPYECGFDPMGSARLPFSMKFFLVAITFLLFDLEIALLLPLPWAIQSNNLNTMLTMALFLISLLAASLAYEWTQEGLEWAE.

The next 3 membrane-spanning stretches (helical) occupy residues 3–23, 55–75, and 84–104; these read LLLT…IAFW, FFLV…LLPL, and LNTM…SLAY.

Belongs to the complex I subunit 3 family. As to quaternary structure, core subunit of respiratory chain NADH dehydrogenase (Complex I) which is composed of 45 different subunits. Interacts with TMEM186. Interacts with TMEM242.

The protein resides in the mitochondrion inner membrane. It carries out the reaction a ubiquinone + NADH + 5 H(+)(in) = a ubiquinol + NAD(+) + 4 H(+)(out). Its function is as follows. Core subunit of the mitochondrial membrane respiratory chain NADH dehydrogenase (Complex I) which catalyzes electron transfer from NADH through the respiratory chain, using ubiquinone as an electron acceptor. Essential for the catalytic activity of complex I. The polypeptide is NADH-ubiquinone oxidoreductase chain 3 (Balaenoptera musculus (Blue whale)).